A 197-amino-acid chain; its full sequence is Protein tyrosine phosphatase receptor type C-associated protein (197 aa).

Residues 33–53 (VVTIVLLLLLLLLLVTALALA) traverse the membrane as a helical segment. Phosphoserine is present on residues S99 and S103. Disordered regions lie at residues 120-164 (GPEE…GSSA) and 177-197 (SAAWDDSAGGAGGQGLRVTAL). A compositionally biased stretch (basic and acidic residues) spans 124-145 (AAAKEEEQRCQAEQTRDPRDTD).

Interacts with CD45/PTPRC. Phosphorylated on tyrosine residues. As to expression, leukocyte-specific. Expressed in B- and T-cell lines, in spleen, thymus, and bone marrow of adult mice, and in embryos.

It localises to the membrane. This chain is Protein tyrosine phosphatase receptor type C-associated protein (Ptprcap), found in Mus musculus (Mouse).